The primary structure comprises 320 residues: Lipoyl synthase (320 aa).

Positions methionine 1 to proline 11 are enriched in polar residues. A disordered region spans residues methionine 1–proline 24. Positions glutamate 14–proline 24 are enriched in basic and acidic residues. Positions 53, 58, 64, 79, 83, 86, and 293 each coordinate [4Fe-4S] cluster. Positions tryptophan 65–leucine 282 constitute a Radical SAM core domain.

Belongs to the radical SAM superfamily. Lipoyl synthase family. [4Fe-4S] cluster serves as cofactor.

It is found in the cytoplasm. It carries out the reaction [[Fe-S] cluster scaffold protein carrying a second [4Fe-4S](2+) cluster] + N(6)-octanoyl-L-lysyl-[protein] + 2 oxidized [2Fe-2S]-[ferredoxin] + 2 S-adenosyl-L-methionine + 4 H(+) = [[Fe-S] cluster scaffold protein] + N(6)-[(R)-dihydrolipoyl]-L-lysyl-[protein] + 4 Fe(3+) + 2 hydrogen sulfide + 2 5'-deoxyadenosine + 2 L-methionine + 2 reduced [2Fe-2S]-[ferredoxin]. Its pathway is protein modification; protein lipoylation via endogenous pathway; protein N(6)-(lipoyl)lysine from octanoyl-[acyl-carrier-protein]: step 2/2. Catalyzes the radical-mediated insertion of two sulfur atoms into the C-6 and C-8 positions of the octanoyl moiety bound to the lipoyl domains of lipoate-dependent enzymes, thereby converting the octanoylated domains into lipoylated derivatives. The protein is Lipoyl synthase of Erythrobacter litoralis (strain HTCC2594).